A 379-amino-acid chain; its full sequence is Fructose-1,6-bisphosphate aldolase/phosphatase (379 aa).

Catalysis depends on D13, which acts as the Proton acceptor; for FBP phosphatase activity. Residues D13, H20, D51, and D52 each contribute to the Mg(2+) site. Residue H20 coordinates beta-D-fructose 1,6-bisphosphate. Residue H20 coordinates dihydroxyacetone phosphate. Y89 provides a ligand contact to beta-D-fructose 1,6-bisphosphate. Q93 provides a ligand contact to Mg(2+). 102–103 (GN) contributes to the beta-D-fructose 1,6-bisphosphate binding site. Residue D130 coordinates Mg(2+). K131 is a binding site for beta-D-fructose 1,6-bisphosphate. K131 lines the dihydroxyacetone phosphate pocket. Y227 (proton donor/acceptor; for FBP aldolase activity) is an active-site residue. K230, D231, and D232 together coordinate Mg(2+). K230 acts as the Schiff-base intermediate with DHAP; for FBP aldolase activity in catalysis. Residues 240 to 241 (QS), R264, D285, and Y346 each bind beta-D-fructose 1,6-bisphosphate. Dihydroxyacetone phosphate-binding residues include R264 and D285.

This sequence belongs to the FBP aldolase/phosphatase family. Homooctamer; dimer of tetramers. Requires Mg(2+) as cofactor.

The catalysed reaction is beta-D-fructose 1,6-bisphosphate + H2O = beta-D-fructose 6-phosphate + phosphate. It catalyses the reaction beta-D-fructose 1,6-bisphosphate = D-glyceraldehyde 3-phosphate + dihydroxyacetone phosphate. It participates in carbohydrate biosynthesis; gluconeogenesis. Its function is as follows. Catalyzes two subsequent steps in gluconeogenesis: the aldol condensation of dihydroxyacetone phosphate (DHAP) and glyceraldehyde-3-phosphate (GA3P) to fructose-1,6-bisphosphate (FBP), and the dephosphorylation of FBP to fructose-6-phosphate (F6P). This chain is Fructose-1,6-bisphosphate aldolase/phosphatase, found in Moorella thermoacetica (strain ATCC 39073 / JCM 9320).